The sequence spans 267 residues: Putative transcription factor Ovo-like 1 (267 aa).

4 consecutive C2H2-type zinc fingers follow at residues 118 to 140 (FTCHICQKSFTHQRMLNRHMKCH), 146 to 168 (HLCTYCGKGFNDTFDLKRHVRTH), 174 to 197 (YKCSLCDKAFTQRCSLESHLKKIH), and 213 to 236 (YVCEECGCTSESQEGHVLHLKERH).

As to expression, expressed in skin, testis, kidney and weakly in lung. Not detected in heart, brain, spleen, liver and skeletal muscle.

It localises to the nucleus. Functionally, putative transcription factor. Involved in hair formation and spermatogenesis. May function in the differentiation and/or maintenance of the urogenital system. This Mus musculus (Mouse) protein is Putative transcription factor Ovo-like 1 (Ovol1).